We begin with the raw amino-acid sequence, 884 residues long: Probable leucine--tRNA ligase, cytoplasmic (884 aa).

The 'HIGH' region motif lies at 40–50; that stretch reads PYMNGKLHLGH. The 'KMSKS' region motif lies at 566–570; it reads KMSKS. Residue Lys569 participates in ATP binding.

The protein belongs to the class-I aminoacyl-tRNA synthetase family.

The protein resides in the cytoplasm. It catalyses the reaction tRNA(Leu) + L-leucine + ATP = L-leucyl-tRNA(Leu) + AMP + diphosphate. The polypeptide is Probable leucine--tRNA ligase, cytoplasmic (Vairimorpha ceranae (strain BRL01) (Microsporidian parasite)).